Reading from the N-terminus, the 419-residue chain is Serine hydroxymethyltransferase (419 aa).

(6S)-5,6,7,8-tetrahydrofolate contacts are provided by residues Leu121 and 125-127 (GHL). Lys230 bears the N6-(pyridoxal phosphate)lysine mark. 355-357 (SPF) contacts (6S)-5,6,7,8-tetrahydrofolate.

It belongs to the SHMT family. Homodimer. Requires pyridoxal 5'-phosphate as cofactor.

The protein localises to the cytoplasm. It catalyses the reaction (6R)-5,10-methylene-5,6,7,8-tetrahydrofolate + glycine + H2O = (6S)-5,6,7,8-tetrahydrofolate + L-serine. The protein operates within one-carbon metabolism; tetrahydrofolate interconversion. It participates in amino-acid biosynthesis; glycine biosynthesis; glycine from L-serine: step 1/1. In terms of biological role, catalyzes the reversible interconversion of serine and glycine with tetrahydrofolate (THF) serving as the one-carbon carrier. This reaction serves as the major source of one-carbon groups required for the biosynthesis of purines, thymidylate, methionine, and other important biomolecules. Also exhibits THF-independent aldolase activity toward beta-hydroxyamino acids, producing glycine and aldehydes, via a retro-aldol mechanism. The sequence is that of Serine hydroxymethyltransferase from Streptococcus equi subsp. zooepidemicus (strain MGCS10565).